A 398-amino-acid polypeptide reads, in one-letter code: Minor cardiolipin synthase ClsB (398 aa).

A helical transmembrane segment spans residues 3–23; that stretch reads VFIVIMIIVVIFFALILLDIF. PLD phosphodiesterase domains are found at residues 141–168 and 311–338; these read MQKR…AEEY and YQGF…DKRS.

It belongs to the phospholipase D family. Cardiolipin synthase subfamily.

The protein localises to the cell membrane. In terms of biological role, involved in the biosynthesis of cardiolipin. The polypeptide is Minor cardiolipin synthase ClsB (clsB) (Bacillus subtilis (strain 168)).